Consider the following 629-residue polypeptide: tRNA uridine 5-carboxymethylaminomethyl modification enzyme MnmG (629 aa).

Residue 14 to 19 coordinates FAD; that stretch reads GAGHAG. 274 to 288 lines the NAD(+) pocket; it reads GPRYCPSIEDKVVRF.

The protein belongs to the MnmG family. In terms of assembly, homodimer. Heterotetramer of two MnmE and two MnmG subunits. Requires FAD as cofactor.

The protein resides in the cytoplasm. Functionally, NAD-binding protein involved in the addition of a carboxymethylaminomethyl (cmnm) group at the wobble position (U34) of certain tRNAs, forming tRNA-cmnm(5)s(2)U34. The polypeptide is tRNA uridine 5-carboxymethylaminomethyl modification enzyme MnmG (Xylella fastidiosa (strain Temecula1 / ATCC 700964)).